Reading from the N-terminus, the 489-residue chain is Metalloreductase STEAP2 (489 aa).

Residues 37–40, 59–60, 92–99, N117, and A150 each bind NADP(+); these read SGDF, SR, and IHREHYTS. Residues W151 and D159 each coordinate FAD. Residues 207–227 traverse the membrane as a helical segment; it reads LFTLWRGPVVVAISLATFFFL. Y228 provides a ligand contact to Fe(3+). The helical transmembrane segment at 258–278 threads the bilayer; it reads LPIVAITLLSLVYLAGLLAAA. In terms of domain architecture, Ferric oxidoreductase spans 258–406; the sequence is LPIVAITLLS…LGYVALLITT (149 aa). Positions 280 and 301 each coordinate FAD. The next 4 helical transmembrane spans lie at 304–324, 358–378, 392–412, and 431–451; these read LGLL…CLPM, MYIS…VTSI, FIQS…VLIY, and FVLA…LLLP. H315 is a heme b binding site. Residue Y318 coordinates Fe(3+). S377 and Q394 together coordinate FAD. Residue H408 coordinates heme b. A Phosphoserine modification is found at S482.

Belongs to the STEAP family. Requires FAD as cofactor. The cofactor is heme b.

It is found in the cell membrane. The protein resides in the endosome membrane. It catalyses the reaction 2 Fe(2+) + NADP(+) + H(+) = 2 Fe(3+) + NADPH. The catalysed reaction is 2 Cu(+) + NADP(+) + H(+) = 2 Cu(2+) + NADPH. Functionally, integral membrane protein that functions as a NADPH-dependent ferric-chelate reductase, using NADPH from one side of the membrane to reduce a Fe(3+) chelate that is bound on the other side of the membrane. Mediates sequential transmembrane electron transfer from NADPH to FAD and onto heme, and finally to the Fe(3+) chelate. Can also reduce Cu(2+) to Cu(1+). The sequence is that of Metalloreductase STEAP2 (Steap2) from Mus musculus (Mouse).